Reading from the N-terminus, the 2925-residue chain is TPR and ankyrin repeat-containing protein 1 (2925 aa).

TPR repeat units lie at residues Ala15–Tyr48 and Lys50–Ser82. ANK repeat units lie at residues Glu168–Thr198, Pro203–Gly232, Asp240–Leu276, Ser463–Ala492, Glu497–Phe518, and Asn546–Ile575. Disordered regions lie at residues Ser612–Thr669, Pro706–Glu741, and Val1077–Val1103. Residues Ser624 to Phe641 show a composition bias toward polar residues. The span at Ala720–Pro730 shows a compositional bias: basic and acidic residues. The segment covering Gly1085 to Val1103 has biased composition (acidic residues). TPR repeat units follow at residues Pro1699–Lys1732 and Leu1793–Leu1826. A coiled-coil region spans residues Glu2301 to Arg2330.

This is TPR and ankyrin repeat-containing protein 1 (TRANK1) from Homo sapiens (Human).